The chain runs to 2146 residues: Phospholipid-transporting ATPase ABCA7 (2146 aa).

The helical transmembrane segment at 22-42 threads the bilayer; it reads PVQLLVELLWPLFLFFILVAV. At 43-549 the chain is on the extracellular side; sequence RHSHPPLEHH…DVFLRVLSRS (507 aa). A disulfide bridge connects residues Cys75 and Cys225. N-linked (GlcNAc...) asparagine glycosylation occurs at Asn312. 6 helical membrane passes run 550 to 570, 593 to 613, 626 to 646, 655 to 675, 687 to 707, and 727 to 747; these read LPLF…KAVV, LGWF…LVLV, GVVF…SFLL, LAAA…VLCV, VAAS…LALL, and VFSL…YGLA. Positions 807 to 1038 constitute an ABC transporter 1 domain; sequence VSVRSLEKRF…LGSGYYLTLV (232 aa). Residue 841-848 coordinates ATP; sequence GHNGAGKT. The chain crosses the membrane as a helical span at residues 849–869; it reads TTLSILSGLFPPSGGSAFILG. Over residues 1048 to 1066 the composition is skewed to basic and acidic residues; the sequence is EKADTDMEGSVDTRQEKKN. Disordered stretches follow at residues 1048–1072 and 1185–1209; these read EKAD…QGSR and TALE…DAVG. A helical transmembrane segment spans residues 1243–1263; sequence IVLPALFVGLALVFSLIVPPF. The Extracellular segment spans residues 1264–1537; it reads GHYPALRLSP…ALMASSVDVL (274 aa). Cys1345 and Cys1359 are oxidised to a cystine. 6 helical membrane passes run 1538 to 1558, 1584 to 1604, 1621 to 1641, 1649 to 1669, 1683 to 1703, and 1729 to 1749; these read VSIC…LVLI, FLWD…IFLA, LLLL…SFFF, VVLT…TFVL, ILKQ…LIDM, and VVGK…LFTL. Residues 1793 to 2025 form the ABC transporter 2 domain; that stretch reads LVLRNLTKVY…FAAGHTLTLR (233 aa). Residue 1827-1834 participates in ATP binding; that stretch reads GVNGAGKT. The segment at 2104–2146 is disordered; sequence QGKDEDTEEQKEAGVGVDPAPGLQHPKRVSQFLDDPSTAETVL.

The protein belongs to the ABC transporter superfamily. ABCA family. In terms of processing, N-glycosylated. In terms of tissue distribution, expressed in leukocytes (at protein level). Widely expressed. Highly expressed in myelo-lymphatic tissues including peripheral leukocytes, thymus, spleen and bone marrow. Expressed in the hippocampus and the cerebellum. Isoform 2: Abundant in lymph node, spleen, thymus and trachea. Isoform 1: Strongly expressed in brain and bone marrow.

It is found in the cell membrane. Its subcellular location is the golgi apparatus membrane. The protein localises to the early endosome membrane. The protein resides in the cytoplasm. It localises to the cell projection. It is found in the ruffle membrane. Its subcellular location is the phagocytic cup. The protein localises to the endoplasmic reticulum. It carries out the reaction ATP + H2O + phospholipidSide 1 = ADP + phosphate + phospholipidSide 2.. The enzyme catalyses a 1,2-diacyl-sn-glycero-3-phosphocholine(out) + ATP + H2O = a 1,2-diacyl-sn-glycero-3-phosphocholine(in) + ADP + phosphate + H(+). The catalysed reaction is a 1,2-diacyl-sn-glycero-3-phospho-L-serine(out) + ATP + H2O = a 1,2-diacyl-sn-glycero-3-phospho-L-serine(in) + ADP + phosphate + H(+). With respect to regulation, ATPase activity is decreased by cholesterol and ceramide. ATPase activity is stimulated by phosphatidylserine, phosphatidylcholine and sphingomyelin, but phosphatidylserine is more effective. Its function is as follows. Catalyzes the translocation of specific phospholipids from the cytoplasmic to the extracellular/lumenal leaflet of membrane coupled to the hydrolysis of ATP. Transports preferentially phosphatidylserine over phosphatidylcholine. Plays a role in lipid homeostasis and macrophage-mediated phagocytosis. Binds APOA1 and may function in apolipoprotein-mediated phospholipid efflux from cells. May also mediate cholesterol efflux. May regulate cellular ceramide homeostasis during keratinocyte differentiation. Involved in lipid raft organization and CD1D localization on thymocytes and antigen-presenting cells, which plays an important role in natural killer T-cell development and activation. Plays a role in phagocytosis of apoptotic cells by macrophages. Macrophage phagocytosis is stimulated by APOA1 or APOA2, probably by stabilization of ABCA7. Also involved in phagocytic clearance of amyloid-beta by microglia cells and macrophages. Further limits amyloid-beta production by playing a role in the regulation of amyloid-beta A4 precursor protein (APP) endocytosis and/or processing. Amyloid-beta is the main component of amyloid plaques found in the brains of Alzheimer patients. In Homo sapiens (Human), this protein is Phospholipid-transporting ATPase ABCA7.